Consider the following 211-residue polypeptide: Uracil phosphoribosyltransferase (211 aa).

Residues arginine 78, arginine 103, and 130 to 138 (DPMLATGGT) contribute to the 5-phospho-alpha-D-ribose 1-diphosphate site. Residues isoleucine 195 and 200–202 (GDA) each bind uracil. Aspartate 201 serves as a coordination point for 5-phospho-alpha-D-ribose 1-diphosphate.

Belongs to the UPRTase family. Mg(2+) is required as a cofactor.

The catalysed reaction is UMP + diphosphate = 5-phospho-alpha-D-ribose 1-diphosphate + uracil. It functions in the pathway pyrimidine metabolism; UMP biosynthesis via salvage pathway; UMP from uracil: step 1/1. Allosterically activated by GTP. Catalyzes the conversion of uracil and 5-phospho-alpha-D-ribose 1-diphosphate (PRPP) to UMP and diphosphate. The chain is Uracil phosphoribosyltransferase from Streptomyces avermitilis (strain ATCC 31267 / DSM 46492 / JCM 5070 / NBRC 14893 / NCIMB 12804 / NRRL 8165 / MA-4680).